The following is a 314-amino-acid chain: (-)-isopiperitenone reductase (314 aa).

NADP(+) is bound at residue 10–33; the sequence is VTGANKGIGFEICRQLAEKGIIVI. Substrate is bound at residue S182.

It belongs to the short-chain dehydrogenases/reductases (SDR) family.

It is found in the cytoplasm. The catalysed reaction is (2R,5R)-isopulegone + NADP(+) = (6R)-isopiperitenone + NADPH + H(+). It participates in secondary metabolite biosynthesis; terpenoid biosynthesis. In terms of biological role, monoterpene synthase that catalyzes the specific reduction of the 1(2)-double bond of (-)-isopiperitenone to produce (+)-cis-isopulegone. Does not catalyze the reverse reaction. Unable to reduce (+)-pulegone, (+)-cis-isopulegone, (-)-menthone or the 1,2-double bond of (-)-carvone. Able to utilize NADH with 20% the efficiency of NADPH. In Mentha piperita (Peppermint), this protein is (-)-isopiperitenone reductase.